Consider the following 77-residue polypeptide: Translation initiation factor IF-1, chloroplastic (77 aa).

The S1-like domain maps to 1-71 (MKEQKLIHEG…TRGRIIYRLR (71 aa)).

Belongs to the IF-1 family. In terms of assembly, component of the 30S ribosomal translation pre-initiation complex which assembles on the 30S ribosome in the order IF-2 and IF-3, IF-1 and N-formylmethionyl-tRNA(fMet); mRNA recruitment can occur at any time during PIC assembly.

It is found in the plastid. The protein resides in the chloroplast. One of the essential components for the initiation of protein synthesis. Stabilizes the binding of IF-2 and IF-3 on the 30S subunit to which N-formylmethionyl-tRNA(fMet) subsequently binds. Helps modulate mRNA selection, yielding the 30S pre-initiation complex (PIC). Upon addition of the 50S ribosomal subunit IF-1, IF-2 and IF-3 are released leaving the mature 70S translation initiation complex. This Cabomba caroliniana (Carolina fanwort) protein is Translation initiation factor IF-1, chloroplastic.